Reading from the N-terminus, the 353-residue chain is B1 bradykinin receptor (353 aa).

The Extracellular segment spans residues 1–40 (MASSWPPLELQSSNQSQLFPQNATACDNAPEAWDLLHRVL). Residues N14 and N22 are each glycosylated (N-linked (GlcNAc...) asparagine). A helical membrane pass occupies residues 41–64 (PTFIISICFFGLLGNLFVLLVFLL). At 65-73 (PRRQLNVAE) the chain is on the cytoplasmic side. A helical membrane pass occupies residues 74 to 98 (IYLANLAASDLVFVLGLPFWAENIW). The Extracellular portion of the chain corresponds to 99 to 111 (NQFNWPFGALLCR). The cysteines at positions 110 and 189 are disulfide-linked. A helical membrane pass occupies residues 112 to 133 (VINGVIKANLFISIFLVVAISQ). The Cytoplasmic portion of the chain corresponds to 134–155 (DRYRVLVHPMASRRQQRRRQAR). The chain crosses the membrane as a helical span at residues 156–178 (VTCVLIWVVGGLLSIPTFLLRSI). The Extracellular segment spans residues 179 to 199 (QAVPDLNITACILLLPHEAWH). N185 carries N-linked (GlcNAc...) asparagine glycosylation. A helical transmembrane segment spans residues 200-226 (FARIVELNILGFLLPLAAIVFFNYHIL). Over 227-247 (ASLRTREEVSRTRCGGRKDSK) the chain is Cytoplasmic. Residues 248 to 272 (TTALILTLVVAFLVCWAPYHFFAFL) form a helical membrane-spanning segment. Residues 273-291 (EFLFQVQAVRGCFWEDFID) are Extracellular-facing. Residues 292 to 314 (LGLQLANFFAFTNSSLNPVIYVF) form a helical membrane-spanning segment. Residues 315 to 353 (VGRLFRTKVWELYKQCTPKSLAPISSSHRKEIFQLFWRN) lie on the Cytoplasmic side of the membrane. C330 carries the S-palmitoyl cysteine lipid modification.

The protein belongs to the G-protein coupled receptor 1 family. Bradykinin receptor subfamily. BDKRB1 sub-subfamily.

The protein localises to the cell membrane. Its function is as follows. This is a receptor for bradykinin. Could be a factor in chronic pain and inflammation. In Homo sapiens (Human), this protein is B1 bradykinin receptor (BDKRB1).